Reading from the N-terminus, the 152-residue chain is MALIIPEKFQHILRVMNTNIDGKRKIMFAMTAIKGMGRRYANVVCKKADVDITKRAGELSEDEIERVITIMSNPRQYKIPNWFLNRQKDVKDGKYSQVMSNALDNKLREDLERLKKIRAHRGLRHYWGLRVRGQHTKTTGRRGRTVGVAKKK.

It belongs to the universal ribosomal protein uS13 family.

The protein resides in the cytoplasm. Functionally, located at the top of the head of the 40S subunit, it contacts several helices of the 18S rRNA. In Argopecten irradians (Bay scallop), this protein is Small ribosomal subunit protein uS13 (RPS18).